The chain runs to 247 residues: ATP synthase subunit a, chloroplastic (247 aa).

A run of 5 helical transmembrane segments spans residues 38–58 (QVLITSWVVIAILLGSATVAV), 95–115 (VPFIGTMFLFIFVSNWSGALL), 134–154 (INTTVALALPTSVAYFYAGLT), 199–219 (LVVVVLVSLVPSVVPIPVMFL), and 220–240 (GLFTSGIQALIFATLAAAYIG).

This sequence belongs to the ATPase A chain family. As to quaternary structure, F-type ATPases have 2 components, CF(1) - the catalytic core - and CF(0) - the membrane proton channel. CF(1) has five subunits: alpha(3), beta(3), gamma(1), delta(1), epsilon(1). CF(0) has four main subunits: a, b, b' and c.

The protein resides in the plastid. It is found in the chloroplast thylakoid membrane. Its function is as follows. Key component of the proton channel; it plays a direct role in the translocation of protons across the membrane. The polypeptide is ATP synthase subunit a, chloroplastic (Platanus occidentalis (Sycamore)).